A 417-amino-acid polypeptide reads, in one-letter code: MFSFEKNSLKNTDKEIFDAIELEVKRQHEHVELIASENYASPAVMEAQGSQLTNKYAEGYHGKRYYGGCEFVDIAEKLAIERAQQLFGVDYANVQPHSGSQANAAVYNAVLKPGDTVLGMDLGAGGHLTHGSKVNFSGKIYNSIQYGLDENGDIDYEQVAQLAKEHKPKMIIAGFSAFSGIINWQKFREIADSVDAVLMADIAHVAGLVAAGVYPNPFPYVDVATTTTHKTLRGPRGGLILCNNNPELAKKFQSAIFPGIQGGPLMHVIAAKAVAFKEALEPSFVDYQKQVLKNAKAMEKVLKQRGINIISGGTSNHLLLLDITNTGFSGKEAEAALGRANITVNKNSIPNDPRSPFVTSGLRIGSPAITTRGFKEKECELVANLLADVVFNCGDEKVENETAAKILDLCDKFPVYK.

(6S)-5,6,7,8-tetrahydrofolate is bound by residues leucine 122 and 126–128 (GHL). Lysine 230 is subject to N6-(pyridoxal phosphate)lysine. 355-357 (SPF) contacts (6S)-5,6,7,8-tetrahydrofolate.

The protein belongs to the SHMT family. As to quaternary structure, homodimer. The cofactor is pyridoxal 5'-phosphate.

It localises to the cytoplasm. The catalysed reaction is (6R)-5,10-methylene-5,6,7,8-tetrahydrofolate + glycine + H2O = (6S)-5,6,7,8-tetrahydrofolate + L-serine. It functions in the pathway one-carbon metabolism; tetrahydrofolate interconversion. It participates in amino-acid biosynthesis; glycine biosynthesis; glycine from L-serine: step 1/1. Its function is as follows. Catalyzes the reversible interconversion of serine and glycine with tetrahydrofolate (THF) serving as the one-carbon carrier. This reaction serves as the major source of one-carbon groups required for the biosynthesis of purines, thymidylate, methionine, and other important biomolecules. Also exhibits THF-independent aldolase activity toward beta-hydroxyamino acids, producing glycine and aldehydes, via a retro-aldol mechanism. In Francisella tularensis subsp. novicida (strain U112), this protein is Serine hydroxymethyltransferase.